The chain runs to 395 residues: NKAP-like protein (395 aa).

Disordered regions lie at residues 1–77 (MSPV…RPLP) and 91–247 (CGGY…ISCK). Phosphoserine occurs at positions 23 and 25. Polar residues predominate over residues 25 to 35 (SPPSALQTSRS). Residues 109 to 130 (DQEKEKEESYRQRRLKERERIG) are compositionally biased toward basic and acidic residues. Ser149 bears the Phosphoserine mark. The span at 150 to 161 (DEHTPAEDEVKN) shows a compositional bias: basic and acidic residues. Composition is skewed to basic residues over residues 177-197 (KTSH…KHKK) and 214-238 (KKVK…KRTK).

This sequence belongs to the NKAP family. Interacts with RBPJ, CIR1 and HDAC3. Specific to testis (at protein level). Detected in differenting spermatogonia and early spermatocytes (at protein level).

Its subcellular location is the nucleus. Functionally, transcriptional repressor of Notch-mediated signaling. Required for spermatogenesis. The sequence is that of NKAP-like protein from Mus musculus (Mouse).